The chain runs to 426 residues: Histone-binding protein RBBP7 (426 aa).

Ala2 is modified (N-acetylalanine). Position 3 is a phosphoserine (Ser3). Lys4 is modified (N6-acetyllysine; alternate). Lys4 participates in a covalent cross-link: Glycyl lysine isopeptide (Lys-Gly) (interchain with G-Cter in SUMO2); alternate. Lys4 participates in a covalent cross-link: Glycyl lysine isopeptide (Lys-Gly) (interchain with G-Cter in ubiquitin); alternate. At Thr10 the chain carries Phosphothreonine. WD repeat units lie at residues 47-122 (QWLP…KINH), 128-173 (RARY…LRLR), 181-217 (GLSWNSNLSGHLLSASDDHTVCLWDINAGPKEGKIVD), 228-269 (VVED…HLVD), 275-312 (VNCLSFNPYSEFILATGSADKTVALWDLRNLKLKLHTF), 318-370 (EIFQ…LFIH), and 377-404 (ISDFSWNPNEPWVICSVSEDNIMQIWQM). Ser95 is modified (phosphoserine). A Glycyl lysine isopeptide (Lys-Gly) (interchain with G-Cter in SUMO2) cross-link involves residue Lys101. Lys119 carries the N6-acetyllysine modification. Lys155 participates in a covalent cross-link: Glycyl lysine isopeptide (Lys-Gly) (interchain with G-Cter in SUMO2). Lys159 carries the N6-acetyllysine; alternate modification. A Glycyl lysine isopeptide (Lys-Gly) (interchain with G-Cter in SUMO2); alternate cross-link involves residue Lys159. A Phosphoserine modification is found at Ser355.

This sequence belongs to the WD repeat RBAP46/RBAP48/MSI1 family. Binds directly to helix 1 of the histone fold of histone H4, a region that is not accessible when H4 is in chromatin. Subunit of the type B histone acetyltransferase (HAT) complex, composed of RBBP7 and HAT1. Subunit of the core histone deacetylase (HDAC) complex, which is composed of HDAC1, HDAC2, RBBP4 and RBBP7. The core HDAC complex associates with SIN3A, ARID4B/SAP180, SAP18, SAP30, SAP130, SUDS3/SAP45 and possibly ARID4A/RBP1 and ING1 to form the SIN3 HDAC complex. Component of the nucleosome remodeling and deacetylase (NuRD) repressor complex, composed of core proteins MTA1, MTA2, MTA3, RBBP4, RBBP7, HDAC1, HDAC2, MBD2, MBD3, and peripherally associated proteins CDK2AP1, CDK2AP2, GATAD2A, GATAD2B, CHD3, CHD4 and CHD5. The exact stoichiometry of the NuRD complex is unknown, and some subunits such as MBD2 and MBD3, GATAD2A and GATAD2B, and CHD3, CHD4 and CHD5 define mutually exclusive NuRD complexes. The NuRD complex may interact with MBD3L1. The NuRD complex may interact with MBD3L2. Subunit of the PRC2/EED-EZH2 complex, which is composed of at least EED, EZH2, RBBP4, RBBP7 and SUZ12. The PRC2/EED-EZH2 complex may also associate with HDAC1. Component of the NURF-1 ISWI chromatin remodeling complex (also called the nucleosome-remodeling factor (NURF) complex) at least composed of SMARCA1, BPTF, RBBP4 and RBBP7. Within the complex interacts with SMARCA1. Component of the BPFT-SMARCA1 complex at least composed of SMARCA1, BPFT, RBBP4 and RBBP7; the complex is catalytically inactive and does not remodel chromatin. Within the complex interacts with SMARCA1. Interacts with BRCA1. Interacts with CDK2AP1. Interacts with CENPA. Interacts with CHD3. Interacts with CHD4. Interacts with CREBBP, and this interaction may be enhanced by the binding of phosphorylated CREB1 to CREBBP. Interacts with HDAC7. Interacts with MTA1. Interacts with PWWP2B. Interacts with RB1 (via viral protein-binding domain). Interacts with SUV39H1.

It is found in the nucleus. In terms of biological role, core histone-binding subunit that may target chromatin remodeling factors, histone acetyltransferases and histone deacetylases to their histone substrates in a manner that is regulated by nucleosomal DNA. Component of several complexes which regulate chromatin metabolism. These include the type B histone acetyltransferase (HAT) complex, which is required for chromatin assembly following DNA replication; the core histone deacetylase (HDAC) complex, which promotes histone deacetylation and consequent transcriptional repression; the nucleosome remodeling and histone deacetylase complex (the NuRD complex), which promotes transcriptional repression by histone deacetylation and nucleosome remodeling; and the PRC2/EED-EZH2 complex, which promotes repression of homeotic genes during development; and the NURF (nucleosome remodeling factor) complex. This Pongo abelii (Sumatran orangutan) protein is Histone-binding protein RBBP7 (RBBP7).